A 359-amino-acid polypeptide reads, in one-letter code: GTP cyclohydrolase FolE2 (359 aa).

It belongs to the GTP cyclohydrolase IV family.

It carries out the reaction GTP + H2O = 7,8-dihydroneopterin 3'-triphosphate + formate + H(+). It participates in cofactor biosynthesis; 7,8-dihydroneopterin triphosphate biosynthesis; 7,8-dihydroneopterin triphosphate from GTP: step 1/1. Its function is as follows. Converts GTP to 7,8-dihydroneopterin triphosphate. The sequence is that of GTP cyclohydrolase FolE2 from Cereibacter sphaeroides (strain ATCC 17025 / ATH 2.4.3) (Rhodobacter sphaeroides).